A 531-amino-acid polypeptide reads, in one-letter code: NADH-quinone oxidoreductase subunit N (531 aa).

The next 13 helical transmembrane spans lie at 13–33, 45–65, 85–105, 150–170, 200–220, 242–262, 289–309, 310–330, 339–359, 365–385, 415–435, 460–480, and 496–516; these read LAPI…EAFA, LALL…AEVI, PALA…LVIA, LFSV…TLFI, YFLL…LLYG, GLLV…VGAV, VAAF…MTWD, IQPF…VLAI, LAYS…AMSP, VFFY…LVAL, VATV…TSGF, ASAA…FTSP, and GFTA…GVWP.

The protein belongs to the complex I subunit 2 family. NDH-1 is composed of 14 different subunits. Subunits NuoA, H, J, K, L, M, N constitute the membrane sector of the complex.

The protein resides in the cell membrane. The enzyme catalyses a quinone + NADH + 5 H(+)(in) = a quinol + NAD(+) + 4 H(+)(out). NDH-1 shuttles electrons from NADH, via FMN and iron-sulfur (Fe-S) centers, to quinones in the respiratory chain. The immediate electron acceptor for the enzyme in this species is believed to be a menaquinone. Couples the redox reaction to proton translocation (for every two electrons transferred, four hydrogen ions are translocated across the cytoplasmic membrane), and thus conserves the redox energy in a proton gradient. The chain is NADH-quinone oxidoreductase subunit N from Beutenbergia cavernae (strain ATCC BAA-8 / DSM 12333 / CCUG 43141 / JCM 11478 / NBRC 16432 / NCIMB 13614 / HKI 0122).